We begin with the raw amino-acid sequence, 383 residues long: MSWQQRIEQALEERQQSAAYRRRQVNQGGNGRYIQLNGEHYLNFSGNDYLGLSQNAQVIAAWQQGAQQYGVGSGGSGHVTGFSTAHQVLEQQLADWLGYPRALLFISGYAANQALLAALMQAEDRILADRLSHASLLEAAAHSPAQLRRFRHNQPQALADLLAKPCDGQILAVTEGVFSMDGDSAPLAELHRLTRAAGAWLMVDDAHGIGVHGEQGRGSCWQQGVRPELLVVTFGKAFGLSGAAVLCDEPTAEYLLQFARHLIYSTAMPPAQASALQAALHCIRQGDELRARLQDNIQRFRQGAAQLSLTLTESVTAIQPLLVGDNQRALDLAQSLREQGLWVSAIRPPTVPPGGARLRITLTAAHQPQDIDRLLEVLHDVSV.

Substrate is bound at residue arginine 21. 108 to 109 provides a ligand contact to pyridoxal 5'-phosphate; sequence GY. A substrate-binding site is contributed by histidine 133. Positions 179, 207, and 233 each coordinate pyridoxal 5'-phosphate. An N6-(pyridoxal phosphate)lysine modification is found at lysine 236. Threonine 350 lines the substrate pocket.

Belongs to the class-II pyridoxal-phosphate-dependent aminotransferase family. BioF subfamily. As to quaternary structure, homodimer. Requires pyridoxal 5'-phosphate as cofactor.

It carries out the reaction 6-carboxyhexanoyl-[ACP] + L-alanine + H(+) = (8S)-8-amino-7-oxononanoate + holo-[ACP] + CO2. It participates in cofactor biosynthesis; biotin biosynthesis. Functionally, catalyzes the decarboxylative condensation of pimeloyl-[acyl-carrier protein] and L-alanine to produce 8-amino-7-oxononanoate (AON), [acyl-carrier protein], and carbon dioxide. This chain is 8-amino-7-oxononanoate synthase, found in Serratia proteamaculans (strain 568).